Consider the following 455-residue polypeptide: Serine--tRNA ligase (455 aa).

252 to 254 (TAE) lines the L-serine pocket. Residues 283 to 285 (RKE) and Val-299 each bind ATP. Glu-306 contacts L-serine. 370–373 (EVVS) contributes to the ATP binding site. An L-serine-binding site is contributed by Thr-406.

The protein belongs to the class-II aminoacyl-tRNA synthetase family. Type-1 seryl-tRNA synthetase subfamily. Homodimer. The tRNA molecule binds across the dimer.

The protein resides in the cytoplasm. The catalysed reaction is tRNA(Ser) + L-serine + ATP = L-seryl-tRNA(Ser) + AMP + diphosphate + H(+). It catalyses the reaction tRNA(Sec) + L-serine + ATP = L-seryl-tRNA(Sec) + AMP + diphosphate + H(+). It participates in aminoacyl-tRNA biosynthesis; selenocysteinyl-tRNA(Sec) biosynthesis; L-seryl-tRNA(Sec) from L-serine and tRNA(Sec): step 1/1. Catalyzes the attachment of serine to tRNA(Ser). Is also able to aminoacylate tRNA(Sec) with serine, to form the misacylated tRNA L-seryl-tRNA(Sec), which will be further converted into selenocysteinyl-tRNA(Sec). The sequence is that of Serine--tRNA ligase from Thermococcus kodakarensis (strain ATCC BAA-918 / JCM 12380 / KOD1) (Pyrococcus kodakaraensis (strain KOD1)).